The primary structure comprises 558 residues: Glucose-6-phosphate isomerase (558 aa).

Lysine 12 is modified (N6-acetyllysine). Phosphoserine occurs at positions 86 and 107. Lysine 142 bears the N6-acetyllysine mark. Position 159 to 160 (159 to 160) interacts with D-glucose 6-phosphate; it reads GS. The residue at position 185 (serine 185) is a Phosphoserine; by CK2. A D-glucose 6-phosphate-binding site is contributed by 210–215; that stretch reads SKTFTT. At threonine 250 the chain carries Phosphothreonine. Positions 354, 358, and 389 each coordinate D-glucose 6-phosphate. Glutamate 358 (proton donor) is an active-site residue. Histidine 389 is a catalytic residue. Lysine 454 is modified (N6-acetyllysine; alternate). Lysine 454 is subject to N6-malonyllysine; alternate. Position 454 is an N6-succinyllysine; alternate (lysine 454). At serine 455 the chain carries Phosphoserine. Lysine 519 is a D-glucose 6-phosphate binding site. Lysine 519 is a catalytic residue.

Belongs to the GPI family. Homodimer; in the catalytically active form. Monomer in the secreted form. Post-translationally, phosphorylation at Ser-185 by CK2 has been shown to decrease enzymatic activity and may contribute to secretion by a non-classical secretory pathway. ISGylated.

The protein localises to the cytoplasm. Its subcellular location is the secreted. It carries out the reaction alpha-D-glucose 6-phosphate = beta-D-fructose 6-phosphate. It functions in the pathway carbohydrate degradation; glycolysis; D-glyceraldehyde 3-phosphate and glycerone phosphate from D-glucose: step 2/4. Functionally, in the cytoplasm, catalyzes the conversion of glucose-6-phosphate to fructose-6-phosphate, the second step in glycolysis, and the reverse reaction during gluconeogenesis. Besides it's role as a glycolytic enzyme, also acts as a secreted cytokine: acts as an angiogenic factor (AMF) that stimulates endothelial cell motility. Acts as a neurotrophic factor, neuroleukin, for spinal and sensory neurons. It is secreted by lectin-stimulated T-cells and induces immunoglobulin secretion. The protein is Glucose-6-phosphate isomerase of Cricetulus griseus (Chinese hamster).